The sequence spans 428 residues: Serine--tRNA ligase (428 aa).

Residue 231–233 (TAE) coordinates L-serine. Residues 262 to 264 (RRE) and V278 contribute to the ATP site. L-serine is bound at residue E285. 349–352 (EVSS) contacts ATP. Position 384 (S384) interacts with L-serine.

This sequence belongs to the class-II aminoacyl-tRNA synthetase family. Type-1 seryl-tRNA synthetase subfamily. Homodimer. The tRNA molecule binds across the dimer.

The protein localises to the cytoplasm. It catalyses the reaction tRNA(Ser) + L-serine + ATP = L-seryl-tRNA(Ser) + AMP + diphosphate + H(+). The enzyme catalyses tRNA(Sec) + L-serine + ATP = L-seryl-tRNA(Sec) + AMP + diphosphate + H(+). The protein operates within aminoacyl-tRNA biosynthesis; selenocysteinyl-tRNA(Sec) biosynthesis; L-seryl-tRNA(Sec) from L-serine and tRNA(Sec): step 1/1. In terms of biological role, catalyzes the attachment of serine to tRNA(Ser). Is also able to aminoacylate tRNA(Sec) with serine, to form the misacylated tRNA L-seryl-tRNA(Sec), which will be further converted into selenocysteinyl-tRNA(Sec). In Chlamydia trachomatis serovar A (strain ATCC VR-571B / DSM 19440 / HAR-13), this protein is Serine--tRNA ligase.